The following is a 489-amino-acid chain: Coronin-1B (489 aa).

Ser-2 is subject to Phosphoserine; by PKC. WD repeat units follow at residues 18–72 (QPVK…GRID), 73–122 (KAYP…SPLT), 123–166 (EPVV…GTAE), 167–210 (ELYR…RGTL), 211–256 (VAER…ENLE), and 257–296 (EPMA…RYFE). Residues 408–444 (RRNVLSDSRPAMAPGSSHLGAPASTTTAADATPSGSL) are disordered. A compositionally biased stretch (low complexity) spans 428–441 (APASTTTAADATPS). The stretch at 449-474 (EAGKLEEVMQELRALRALVKEQGDRI) forms a coiled coil.

It belongs to the WD repeat coronin family. In terms of assembly, forms homooligomers, but does not form complexes with the other coronins. Interacts with Arp2/3 complex components, including ACTR2, ARPC1B and ARPC2. Binds actin. Phosphorylation by PKC on Ser-2 regulates the interaction with the Arp2/3 complex and cell motility in fibroblasts. Phosphorylation does not seem to affect subcellular location.

The protein resides in the cytoplasm. It is found in the cytoskeleton. The protein localises to the stress fiber. Its function is as follows. Regulates leading edge dynamics and cell motility in fibroblasts. May be involved in cytokinesis and signal transduction. In Homo sapiens (Human), this protein is Coronin-1B (CORO1B).